The chain runs to 466 residues: MAQTLYDKIWQAHTIASINEQTDLLYIDRHLVHEVTSPQAFAGLREKNRTVRCPEKTFATMDHNVSTKSRSLDAASEVSKNQLMALDANCKEFGIVLYDLNSINQGIVHVMGPEQGITLPGTTIVCGDSHTSTHGAFGALAHGIGTSEVEHVLATQTLQQKKAKSLKIQINGRLRPTVTAKDLIMAVIGKLGTAGGTGYVAEFCGEGIEALSMEARMTLCNMSIEMGAKAGLIASDQITYDYLKGRPFAPKGADFDAAVKYWETLKTDDGAQFDHVVELEASSIQPQITWGTSPEQVIGVDECIPDPDKEPDLIKADAIRSALKYMGLKAGEKLSSAKVDTVFIGSCTNSRIEDLRAAAKIVEGKKVVAGIEALIVPGSGLVKKQAEDEGLADIFKAAGFEWREPGCSMCLAMNDDRLGAGKRCASTSNRNFEGRQGRGGRTHLVSPAMAAAAAIHGHFVDIRGEA.

Residues cysteine 347, cysteine 407, and cysteine 410 each contribute to the [4Fe-4S] cluster site.

This sequence belongs to the aconitase/IPM isomerase family. LeuC type 1 subfamily. In terms of assembly, heterodimer of LeuC and LeuD. It depends on [4Fe-4S] cluster as a cofactor.

It carries out the reaction (2R,3S)-3-isopropylmalate = (2S)-2-isopropylmalate. The protein operates within amino-acid biosynthesis; L-leucine biosynthesis; L-leucine from 3-methyl-2-oxobutanoate: step 2/4. Functionally, catalyzes the isomerization between 2-isopropylmalate and 3-isopropylmalate, via the formation of 2-isopropylmaleate. In Pseudoalteromonas translucida (strain TAC 125), this protein is 3-isopropylmalate dehydratase large subunit.